The sequence spans 340 residues: Cell division protein FtsQ (340 aa).

The segment at 1-41 (MQGLNPFHRDQGAGGRPAPVRPAPARPAPVAPRTPRKDPAP) is disordered. Over 1–55 (MQGLNPFHRDQGAGGRPAPVRPAPARPAPVAPRTPRKDPAPSRLAYRLNRMMLRP) the chain is Cytoplasmic. A compositionally biased stretch (pro residues) spans 19 to 32 (PVRPAPARPAPVAP). A helical membrane pass occupies residues 56–78 (LVRRLVHVGLPAFLAALVAGIWL). At 79-340 (SDDTRRANLT…NAAKAKKKSG (262 aa)) the chain is on the periplasmic side. One can recognise a POTRA domain in the interval 104–172 (FMVKMMTIEG…GVLSAVVTER (69 aa)). The tract at residues 308-340 (RQARGQPELGPDGTPLAPEATAGNAAKAKKKSG) is disordered. A compositionally biased stretch (low complexity) spans 324 to 333 (APEATAGNAA).

The protein belongs to the FtsQ/DivIB family. FtsQ subfamily.

It is found in the cell inner membrane. Its function is as follows. Essential cell division protein. In Paracoccus denitrificans (strain Pd 1222), this protein is Cell division protein FtsQ.